Consider the following 237-residue polypeptide: uncharacterized protein (237 aa).

In terms of domain architecture, Response regulatory spans 3–116 (SALLIDDERF…RLAKTVQRLL (114 aa)). D54 carries the 4-aspartylphosphate modification. Residues 135 to 236 (IPCTGLNRIV…LKELKEMLGF (102 aa)) form the HTH LytTR-type domain.

This is an uncharacterized protein from Vibrio cholerae serotype O1 (strain ATCC 39315 / El Tor Inaba N16961).